The primary structure comprises 299 residues: ATP phosphoribosyltransferase (299 aa).

It belongs to the ATP phosphoribosyltransferase family. Long subfamily. Mg(2+) is required as a cofactor.

The protein localises to the cytoplasm. The catalysed reaction is 1-(5-phospho-beta-D-ribosyl)-ATP + diphosphate = 5-phospho-alpha-D-ribose 1-diphosphate + ATP. It participates in amino-acid biosynthesis; L-histidine biosynthesis; L-histidine from 5-phospho-alpha-D-ribose 1-diphosphate: step 1/9. Its activity is regulated as follows. Feedback inhibited by histidine. Functionally, catalyzes the condensation of ATP and 5-phosphoribose 1-diphosphate to form N'-(5'-phosphoribosyl)-ATP (PR-ATP). Has a crucial role in the pathway because the rate of histidine biosynthesis seems to be controlled primarily by regulation of HisG enzymatic activity. This is ATP phosphoribosyltransferase from Shewanella sp. (strain MR-7).